Consider the following 469-residue polypeptide: Glutamate--tRNA ligase (469 aa).

The 'HIGH' region motif lies at 11–21; sequence PSPTGFIHLGN. Positions 243–247 match the 'KMSKS' region motif; that stretch reads KMSKR. Position 246 (Lys246) interacts with ATP.

It belongs to the class-I aminoacyl-tRNA synthetase family. Glutamate--tRNA ligase type 1 subfamily. Monomer.

It is found in the cytoplasm. It catalyses the reaction tRNA(Glu) + L-glutamate + ATP = L-glutamyl-tRNA(Glu) + AMP + diphosphate. In terms of biological role, catalyzes the attachment of glutamate to tRNA(Glu) in a two-step reaction: glutamate is first activated by ATP to form Glu-AMP and then transferred to the acceptor end of tRNA(Glu). The polypeptide is Glutamate--tRNA ligase (Burkholderia ambifaria (strain MC40-6)).